The chain runs to 206 residues: Small ribosomal subunit protein uS4 (206 aa).

The disordered stretch occupies residues 29–52; the sequence is LDKRPYAPGQHGQRRGRGRPSDYS. Residues 96–171 enclose the S4 RNA-binding domain; sequence RRLDNVVFRM…QKRRRVSPWV (76 aa).

The protein belongs to the universal ribosomal protein uS4 family. In terms of assembly, part of the 30S ribosomal subunit. Contacts protein S5. The interaction surface between S4 and S5 is involved in control of translational fidelity.

In terms of biological role, one of the primary rRNA binding proteins, it binds directly to 16S rRNA where it nucleates assembly of the body of the 30S subunit. Functionally, with S5 and S12 plays an important role in translational accuracy. This chain is Small ribosomal subunit protein uS4, found in Deinococcus deserti (strain DSM 17065 / CIP 109153 / LMG 22923 / VCD115).